The chain runs to 597 residues: UvrABC system protein C (597 aa).

The region spanning 15-93 (DNPGVYQYYD…IKTLQPRYNV (79 aa)) is the GIY-YIG domain. The UVR domain occupies 207–242 (KESLKDFKKLMNNYAQNLQFEEAQKIKEKIEVLENY).

It belongs to the UvrC family. As to quaternary structure, interacts with UvrB in an incision complex.

It is found in the cytoplasm. Its function is as follows. The UvrABC repair system catalyzes the recognition and processing of DNA lesions. UvrC both incises the 5' and 3' sides of the lesion. The N-terminal half is responsible for the 3' incision and the C-terminal half is responsible for the 5' incision. The sequence is that of UvrABC system protein C from Flavobacterium johnsoniae (strain ATCC 17061 / DSM 2064 / JCM 8514 / BCRC 14874 / CCUG 350202 / NBRC 14942 / NCIMB 11054 / UW101) (Cytophaga johnsonae).